The sequence spans 191 residues: Protein Ves (191 aa).

This sequence belongs to the Ves family.

This is Protein Ves from Shigella boydii serotype 18 (strain CDC 3083-94 / BS512).